The sequence spans 367 residues: Ferrochelatase (367 aa).

The Fe cation site is built by H226 and E307.

Belongs to the ferrochelatase family.

The protein localises to the cytoplasm. It catalyses the reaction heme b + 2 H(+) = protoporphyrin IX + Fe(2+). The protein operates within porphyrin-containing compound metabolism; protoheme biosynthesis; protoheme from protoporphyrin-IX: step 1/1. Functionally, catalyzes the ferrous insertion into protoporphyrin IX. This chain is Ferrochelatase, found in Burkholderia pseudomallei (strain 668).